Reading from the N-terminus, the 244-residue chain is 5-oxoprolinase subunit A (244 aa).

It belongs to the LamB/PxpA family. In terms of assembly, forms a complex composed of PxpA, PxpB and PxpC.

The enzyme catalyses 5-oxo-L-proline + ATP + 2 H2O = L-glutamate + ADP + phosphate + H(+). Catalyzes the cleavage of 5-oxoproline to form L-glutamate coupled to the hydrolysis of ATP to ADP and inorganic phosphate. The sequence is that of 5-oxoprolinase subunit A from Salmonella arizonae (strain ATCC BAA-731 / CDC346-86 / RSK2980).